A 141-amino-acid polypeptide reads, in one-letter code: Ubiquitin-like protein ATG12 (141 aa).

Residues 1 to 53 are disordered; sequence MSEDSEVVLQLPSAPVGAGGESLPELSPETATPEPPSSAAVSPGTEEPPGDTK. The span at 23–40 shows a compositional bias: low complexity; sequence LPELSPETATPEPPSSAA. Residue Gly141 forms a Glycyl lysine isopeptide (Gly-Lys) (interchain with K-? in acceptor protein) linkage.

It belongs to the ATG12 family. Forms a conjugate with ATG5. Part of the minor complex composed of 4 sets of ATG12-ATG5 and ATG16L1 (400 kDa); this complex interacts with ATG3 leading to disruption of ATG7 interaction and promotion of ATG8-like proteins lipidation. Forms an 800-kDa complex composed of ATG12-ATG5 and ATG16L2. Interacts with DHX58/RIG-1, IFIH1/MDA5 and MAVS/IPS-1 in monomeric form as well as in ATG12-ATG5 conjugate. The interaction with MAVS is further enhanced upon vesicular stomatitis virus (VSV) infection. Interacts with ATG3; this interaction is essential for phosphatidylethanolamine (PE)-conjugated ATG8-like proteins formation. Interacts with ATG7. Interacts with ATG10. The ATG12-ATG5 conjugate interacts with RAB33A; this interaction is bridged by ATG16L1 and promotes ATG12-ATG5-ATG16L1 complex recruitment to phagophores. Interacts with TECPR1. Interacts with SH3BGRL. The ATG12-ATG5 conjugate interacts with PDCD6IP (via the BRO1 domain); this interaction is bridged by ATG12 and promotes multiple PDCD6IP-mediated functions such as endolysosomal trafficking, macroautophagy and exosome biogenesis. In terms of processing, acetylated by EP300. Ubiquitous.

It localises to the cytoplasm. The protein resides in the preautophagosomal structure membrane. Ubiquitin-like protein involved in autophagy vesicles formation. Conjugation with ATG5 through a ubiquitin-like conjugating system involving also ATG7 as an E1-like activating enzyme and ATG10 as an E2-like conjugating enzyme, is essential for its function. The ATG12-ATG5 conjugate acts as an E3-like enzyme which is required for lipidation of ATG8 family proteins and their association to the vesicle membranes. As part of the ATG8 conjugation system with ATG5 and ATG16L1, required for recruitment of LRRK2 to stressed lysosomes and induction of LRRK2 kinase activity in response to lysosomal stress. In terms of biological role, (Microbial infection) May act as a proviral factor. In association with ATG5, negatively regulates the innate antiviral immune response by impairing the type I IFN production pathway upon vesicular stomatitis virus (VSV) infection. The protein is Ubiquitin-like protein ATG12 of Mus musculus (Mouse).